A 776-amino-acid chain; its full sequence is Systemic RNA interference defective protein 1 (776 aa).

An N-terminal signal peptide occupies residues 1-17; that stretch reads MIRVYLIILMHLVIGLT. Over 18-319 the chain is Extracellular; that stretch reads QNNSTTPSPI…ENQSYAVPTA (302 aa). 8 N-linked (GlcNAc...) asparagine glycosylation sites follow: Asn-19, Asn-20, Asn-32, Asn-205, Asn-210, Asn-234, Asn-290, and Asn-311. The segment at 22–312 is involved in dsRNA-binding; the sequence is TTPSPIITSS…SFEFKKLENQ (291 aa). Residues 320–340 traverse the membrane as a helical segment; that stretch reads LMMIFLTTPCLLFLPIVINII. Residues 341–429 lie on the Cytoplasmic side of the membrane; that stretch reads KNSRKLAPSQ…KQDSLSLHGQ (89 aa). The segment at 360–390 is disordered; it reads PSEQRDMDLSHDEQQNTSSELENNGEIPAAE. Residues 362–373 are compositionally biased toward basic and acidic residues; sequence EQRDMDLSHDEQ. Residues 430-450 form a helical membrane-spanning segment; the sequence is MLQYPVAIILPVLMHTAIEFH. At 451 to 481 the chain is on the extracellular side; sequence KWTTSTMANRDEMCFHNHACARPLGELRAWN. A helical membrane pass occupies residues 482–502; the sequence is NIITNIGYTLYGAIFIVLSIC. Topologically, residues 503-510 are cytoplasmic; the sequence is RRGRHEYS. The chain crosses the membrane as a helical span at residues 511 to 531; sequence HVFGTYECTLLDVTIGVFMVL. The Extracellular segment spans residues 532 to 543; sequence QSIASATYHICP. Residues 544-564 traverse the membrane as a helical segment; sequence SDVAFQFDTPCIQVICGLLMV. Over 565–575 the chain is Cytoplasmic; it reads RQWFVRHESPS. Residues 576-596 form a helical membrane-spanning segment; the sequence is PAYTNILLVGVVSLNFLISAF. Residues 597 to 599 are Extracellular-facing; sequence SKT. The chain crosses the membrane as a helical span at residues 600–620; sequence SYVRFIIAVIHVIVVGSICLA. The Cytoplasmic segment spans residues 621-633; it reads KERSLGSEKLKTR. Residues 634–654 form a helical membrane-spanning segment; the sequence is FFIMAFSMGNFAAIVMYLTLS. Residues 655–659 lie on the Extracellular side of the membrane; the sequence is AFHLN. Residues 660 to 680 form a helical membrane-spanning segment; sequence QIATYCFIINCIMYLMYYGCM. At 681–691 the chain is on the cytoplasmic side; it reads KVLHSERITSK. Residues 692-712 form a helical membrane-spanning segment; that stretch reads AKLCGALSLLAWAVAGFFFFQ. Residues 713 to 741 lie on the Extracellular side of the membrane; sequence DDTDWTRSAAASRALNKPCLLLGFFGSHD. Residues 742-762 traverse the membrane as a helical segment; sequence LWHIFGALAGLFTFIFVSFVD. The Cytoplasmic portion of the chain corresponds to 763–776; the sequence is DDLINTRKTSINIF.

It belongs to the SID1 family. In terms of assembly, may self-associate to form multimers. In terms of tissue distribution, expressed in most non-neuronal cells, including body wall muscle cells.

The protein localises to the cell membrane. Its function is as follows. Plays a role in RNA-mediated gene silencing by acting cell-autonomously as a channel for the transport of double-stranded RNA (dsRNA) between cells. Mediates the spread of dsRNA and subsequent silencing of genes in cells distant from the site of dsRNA introduction. Selective for dsRNA. Preferentially binds long dsRNA, from 50 base pairs up to 700. Short 20 base-pair long molecules are not bound. May also bind dsDNA, but with lower affinity. Binding may be sequence-independent. Required for avoidance behavior induced by small RNAs derived from pathogenic bacteria such as P.aeruginosa. The sequence is that of Systemic RNA interference defective protein 1 from Caenorhabditis elegans.